The following is a 98-amino-acid chain: Integration host factor subunit alpha (98 aa).

The protein belongs to the bacterial histone-like protein family. Heterodimer of an alpha and a beta chain.

This protein is one of the two subunits of integration host factor, a specific DNA-binding protein that functions in genetic recombination as well as in transcriptional and translational control. This is Integration host factor subunit alpha from Idiomarina loihiensis (strain ATCC BAA-735 / DSM 15497 / L2-TR).